We begin with the raw amino-acid sequence, 539 residues long: Lysophospholipid acyltransferase LPEAT2 (539 aa).

The helical transmembrane segment at 93–113 (LVICLPIALIRLVLFAASLAV) threads the bilayer. The HXXXXD motif signature appears at 178-183 (HVSYIE). 3 EF-hand domains span residues 426–455 (KRIF…VLTQ), 457–492 (LFKQ…TIPN), and 493–528 (LNKD…NPLL). 10 residues coordinate Ca(2+): Asp-470, Asp-472, Asp-474, Tyr-476, Glu-481, Asp-506, Asp-508, Asp-510, Arg-512, and Asp-517.

Belongs to the 1-acyl-sn-glycerol-3-phosphate acyltransferase family.

Its subcellular location is the golgi apparatus membrane. It localises to the late endosome membrane. It catalyses the reaction a 1-acyl-sn-glycero-3-phosphoethanolamine + an acyl-CoA = a 1,2-diacyl-sn-glycero-3-phosphoethanolamine + CoA. The catalysed reaction is a 1-acyl-sn-glycero-3-phosphocholine + an acyl-CoA = a 1,2-diacyl-sn-glycero-3-phosphocholine + CoA. It carries out the reaction a 1-acyl-sn-glycero-3-phospho-L-serine + an acyl-CoA = a 1,2-diacyl-sn-glycero-3-phospho-L-serine + CoA. Its pathway is lipid metabolism; phospholipid metabolism. Functionally, possesses acyl-CoA-dependent lysophospholipid acyltransferase activity with a subset of lysophospholipids as substrates. Exhibits strong acylation activity on lysophosphatidylethanolamine (LPE), and lower activity on lysophosphatidylcholine (LPC) and lysophosphatidylserine (LPS). Exhibits acylation activity on both LPE and LPC. Has a preference for 18:1-LPE over 16:0-LPE as acceptor. Palmitoyl-CoA (16:0-CoA) is a better acyl donor than oleoyl-CoA (18:1-CoA). Among several different acyl-CoA species the best acyl donor is eicosanoyl-CoA (20:0-CoA). Activity is calcium-independent. Its activity is essential for maintaining adequate levels of phosphatidylethanolamine (PE), LPE and LPC in the cells, which is crucial for plant growth regulation. In Arabidopsis thaliana (Mouse-ear cress), this protein is Lysophospholipid acyltransferase LPEAT2.